Here is a 389-residue protein sequence, read N- to C-terminus: S-adenosylmethionine synthase (389 aa).

Residue H17 coordinates ATP. A Mg(2+)-binding site is contributed by D19. E45 lines the K(+) pocket. L-methionine is bound by residues E58 and Q101. Residues 101-111 are flexible loop; it reads QSPDIAQGVTE. ATP contacts are provided by residues 168–170, 234–235, D243, 249–250, A266, and K270; these read DSK, RF, and RK. Residue D243 participates in L-methionine binding. K274 contributes to the L-methionine binding site.

This sequence belongs to the AdoMet synthase family. In terms of assembly, homotetramer; dimer of dimers. Mg(2+) is required as a cofactor. The cofactor is K(+).

Its subcellular location is the cytoplasm. The catalysed reaction is L-methionine + ATP + H2O = S-adenosyl-L-methionine + phosphate + diphosphate. It functions in the pathway amino-acid biosynthesis; S-adenosyl-L-methionine biosynthesis; S-adenosyl-L-methionine from L-methionine: step 1/1. In terms of biological role, catalyzes the formation of S-adenosylmethionine (AdoMet) from methionine and ATP. The overall synthetic reaction is composed of two sequential steps, AdoMet formation and the subsequent tripolyphosphate hydrolysis which occurs prior to release of AdoMet from the enzyme. This is S-adenosylmethionine synthase from Geotalea uraniireducens (strain Rf4) (Geobacter uraniireducens).